The primary structure comprises 465 residues: Cysteine--tRNA ligase (465 aa).

C27 is a Zn(2+) binding site. Residues 29–39 carry the 'HIGH' region motif; sequence PTVYNFFHIGN. Zn(2+) is bound by residues C207, H232, and E236. The 'KMSKS' region motif lies at 264–268; that stretch reads KMSKS. An ATP-binding site is contributed by K267.

The protein belongs to the class-I aminoacyl-tRNA synthetase family. In terms of assembly, monomer. Zn(2+) serves as cofactor.

Its subcellular location is the cytoplasm. The catalysed reaction is tRNA(Cys) + L-cysteine + ATP = L-cysteinyl-tRNA(Cys) + AMP + diphosphate. The sequence is that of Cysteine--tRNA ligase from Clostridium botulinum (strain Okra / Type B1).